Reading from the N-terminus, the 176-residue chain is Transcriptional repressor NrdR (176 aa).

A zinc finger lies at 3–34; sequence CPYCGSLETQVKDSRPTDDASAIRRRRVCPDC. The ATP-cone domain occupies 49 to 139; that stretch reads LTVLKKSGRR…VYRNFREARD (91 aa). The interval 147 to 176 is disordered; it reads LDGAAQPEAPSKDDGGTDEPPAKTRAPTRA.

This sequence belongs to the NrdR family. Zn(2+) serves as cofactor.

Functionally, negatively regulates transcription of bacterial ribonucleotide reductase nrd genes and operons by binding to NrdR-boxes. The polypeptide is Transcriptional repressor NrdR (Methylocella silvestris (strain DSM 15510 / CIP 108128 / LMG 27833 / NCIMB 13906 / BL2)).